We begin with the raw amino-acid sequence, 928 residues long: Isoleucine--tRNA ligase (928 aa).

The short motif at 57-67 (PFANGNIHMGH) is the 'HIGH' region element. Glutamate 554 is an L-isoleucyl-5'-AMP binding site. The short motif at 595–599 (KMSKS) is the 'KMSKS' region element. Lysine 598 contributes to the ATP binding site. Positions 887, 890, 907, and 910 each coordinate Zn(2+).

It belongs to the class-I aminoacyl-tRNA synthetase family. IleS type 1 subfamily. In terms of assembly, monomer. It depends on Zn(2+) as a cofactor.

The protein localises to the cytoplasm. The catalysed reaction is tRNA(Ile) + L-isoleucine + ATP = L-isoleucyl-tRNA(Ile) + AMP + diphosphate. Functionally, catalyzes the attachment of isoleucine to tRNA(Ile). As IleRS can inadvertently accommodate and process structurally similar amino acids such as valine, to avoid such errors it has two additional distinct tRNA(Ile)-dependent editing activities. One activity is designated as 'pretransfer' editing and involves the hydrolysis of activated Val-AMP. The other activity is designated 'posttransfer' editing and involves deacylation of mischarged Val-tRNA(Ile). The chain is Isoleucine--tRNA ligase from Lactobacillus johnsonii (strain CNCM I-12250 / La1 / NCC 533).